We begin with the raw amino-acid sequence, 216 residues long: MRKYLAEFLGTFMLVFLGTATVVIAKGDVLAIGLAFGLAITVSAYAFGGISGGHFNPAVTTAMLINRRIDAADAIGYIIAQIIGAIVASAAVKSFVSALGLSATLLGQTDFPKIGSGMAFFVEALVTFLFLMVILNVTSNDHGNADFAGLTIGVTLAFLIIVALNLTGGSLNPARSIGPAIFAGGSALSHLWVYILAPEVGAILAAFCARVMGSED.

A run of 2 helical transmembrane segments spans residues 5–25 and 30–50; these read LAEF…VVIA and LAIG…FGGI. The NPA 1 motif lies at 56 to 58; sequence NPA. 3 helical membrane-spanning segments follow: residues 72 to 92, 114 to 134, and 147 to 167; these read ADAI…SAAV, IGSG…LMVI, and FAGL…LNLT. Positions 172-174 match the NPA 2 motif; sequence NPA. A helical transmembrane segment spans residues 191–213; that stretch reads LWVYILAPEVGAILAAFCARVMG.

Belongs to the MIP/aquaporin (TC 1.A.8) family.

It localises to the cell membrane. In terms of biological role, probable transporter that facilitates the transmembrane diffusion of an unknown substrate. Is not permeable to water, dihydroxyacetone, glycerol, urea, H(2)O(2) and D/L-lactic acid. The protein is Glycerol uptake facilitator protein-like 6 of Lactiplantibacillus plantarum (strain ATCC BAA-793 / NCIMB 8826 / WCFS1) (Lactobacillus plantarum).